Consider the following 286-residue polypeptide: MKKVLGIYGNANRHWVGDGFPVRSLFSYNTLGQHISPFLLLDYAGPADFPPAQQRRGVGQHPHRGFETVTIVYQGEVEHHDSTGAGGRIGPGDVQWMTAASGILHEEYHSERFRSTGGTLEMVQLWVNLPSSDKMNPPRYQTLLDADIPRVGLPDRAGELRVIAGRYGRHQGPALTHSPLAVWDVQLKAGKHLALDLPKGHTCAVVVLRGTLAVGDEIVREAQVALLDRDDPRLELEANNDVQLLVLSGEPLDEPIIGYGPFVMSSREEIDQAIEDFENGRFIRAH.

A divalent metal cation contacts are provided by histidine 61, histidine 63, histidine 105, and glutamate 107.

It belongs to the pirin family. A divalent metal cation is required as a cofactor.

It carries out the reaction quercetin + O2 = 2-(3,4-dihydroxybenzoyloxy)-4,6-dihydroxybenzoate + CO. Its pathway is flavonoid metabolism; quercetin degradation. Functionally, putative quercetin 2,3-dioxygenase. This chain is Putative quercetin 2,3-dioxygenase PA2418, found in Pseudomonas aeruginosa (strain ATCC 15692 / DSM 22644 / CIP 104116 / JCM 14847 / LMG 12228 / 1C / PRS 101 / PAO1).